The sequence spans 95 residues: Acyl carrier protein (95 aa).

The Carrier domain maps to 4–79 (KEIFERIEQV…HVMELTLDLV (76 aa)). An O-(pantetheine 4'-phosphoryl)serine modification is found at Ser-39.

It belongs to the acyl carrier protein (ACP) family. 4'-phosphopantetheine is transferred from CoA to a specific serine of apo-ACP by AcpS. This modification is essential for activity because fatty acids are bound in thioester linkage to the sulfhydryl of the prosthetic group.

The protein localises to the cytoplasm. The protein operates within lipid metabolism; fatty acid biosynthesis. Functionally, carrier of the growing fatty acid chain in fatty acid biosynthesis. This is Acyl carrier protein from Saccharopolyspora erythraea (strain ATCC 11635 / DSM 40517 / JCM 4748 / NBRC 13426 / NCIMB 8594 / NRRL 2338).